The sequence spans 491 residues: Trigger factor (491 aa).

Positions 169-254 (GDRVTIDYLG…VKDVAAAAPI (86 aa)) constitute a PPIase FKBP-type domain. Positions 434 to 491 (KVSKEELTAEDDADEKPAKKTASKKKAAAKADAAEGEEAAAPKRKAPAKKKASDESAE) are disordered. The segment covering 452–461 (KKTASKKKAA) has biased composition (basic residues).

Belongs to the FKBP-type PPIase family. Tig subfamily.

Its subcellular location is the cytoplasm. It catalyses the reaction [protein]-peptidylproline (omega=180) = [protein]-peptidylproline (omega=0). Functionally, involved in protein export. Acts as a chaperone by maintaining the newly synthesized protein in an open conformation. Functions as a peptidyl-prolyl cis-trans isomerase. The polypeptide is Trigger factor (Sinorhizobium medicae (strain WSM419) (Ensifer medicae)).